Consider the following 358-residue polypeptide: Protein RecA (358 aa).

Position 76–83 (76–83) interacts with ATP; that stretch reads GPESSGKT.

The protein belongs to the RecA family.

It localises to the cytoplasm. Can catalyze the hydrolysis of ATP in the presence of single-stranded DNA, the ATP-dependent uptake of single-stranded DNA by duplex DNA, and the ATP-dependent hybridization of homologous single-stranded DNAs. It interacts with LexA causing its activation and leading to its autocatalytic cleavage. The sequence is that of Protein RecA from Rhodospirillum centenum (strain ATCC 51521 / SW).